Reading from the N-terminus, the 457-residue chain is Amidophosphoribosyltransferase (457 aa).

Residue Cys2 is the Nucleophile of the active site. The Glutamine amidotransferase type-2 domain maps to 2–223; sequence CGVVGIYHPD…PGKAAIIKDG (222 aa). A [4Fe-4S] cluster-binding site is contributed by Cys239. Positions 286, 348, and 349 each coordinate Mg(2+). 3 residues coordinate [4Fe-4S] cluster: Cys385, Cys438, and Cys441.

It in the C-terminal section; belongs to the purine/pyrimidine phosphoribosyltransferase family. It depends on Mg(2+) as a cofactor. [4Fe-4S] cluster serves as cofactor.

The enzyme catalyses 5-phospho-beta-D-ribosylamine + L-glutamate + diphosphate = 5-phospho-alpha-D-ribose 1-diphosphate + L-glutamine + H2O. Its pathway is purine metabolism; IMP biosynthesis via de novo pathway; N(1)-(5-phospho-D-ribosyl)glycinamide from 5-phospho-alpha-D-ribose 1-diphosphate: step 1/2. Catalyzes the formation of phosphoribosylamine from phosphoribosylpyrophosphate (PRPP) and glutamine. This Archaeoglobus fulgidus (strain ATCC 49558 / DSM 4304 / JCM 9628 / NBRC 100126 / VC-16) protein is Amidophosphoribosyltransferase.